The primary structure comprises 588 residues: Urease subunit alpha (588 aa).

The Urease domain maps to glycine 149–phenylalanine 588. Ni(2+) contacts are provided by histidine 154, histidine 156, and lysine 237. Lysine 237 carries the N6-carboxylysine modification. Residue histidine 239 coordinates substrate. 2 residues coordinate Ni(2+): histidine 266 and histidine 292. The Proton donor role is filled by histidine 340. Ni(2+) is bound at residue aspartate 380.

Belongs to the metallo-dependent hydrolases superfamily. Urease alpha subunit family. In terms of assembly, heterotrimer of UreA (gamma), UreB (beta) and UreC (alpha) subunits. Three heterotrimers associate to form the active enzyme. Ni cation serves as cofactor. Carboxylation allows a single lysine to coordinate two nickel ions.

Its subcellular location is the cytoplasm. It catalyses the reaction urea + 2 H2O + H(+) = hydrogencarbonate + 2 NH4(+). It participates in nitrogen metabolism; urea degradation; CO(2) and NH(3) from urea (urease route): step 1/1. The sequence is that of Urease subunit alpha from Opitutus terrae (strain DSM 11246 / JCM 15787 / PB90-1).